The primary structure comprises 148 residues: 3-dehydroquinate dehydratase (148 aa).

Y23 serves as the catalytic Proton acceptor. Residues N75, H81, and D88 each contribute to the substrate site. H101 acts as the Proton donor in catalysis. Substrate contacts are provided by residues M102–S103 and R112.

Belongs to the type-II 3-dehydroquinase family. Homododecamer.

The enzyme catalyses 3-dehydroquinate = 3-dehydroshikimate + H2O. The protein operates within metabolic intermediate biosynthesis; chorismate biosynthesis; chorismate from D-erythrose 4-phosphate and phosphoenolpyruvate: step 3/7. In terms of biological role, catalyzes a trans-dehydration via an enolate intermediate. The protein is 3-dehydroquinate dehydratase of Syntrophotalea carbinolica (strain DSM 2380 / NBRC 103641 / GraBd1) (Pelobacter carbinolicus).